A 476-amino-acid chain; its full sequence is ATP synthase subunit beta (476 aa).

154–161 provides a ligand contact to ATP; the sequence is GGAGVGKT.

It belongs to the ATPase alpha/beta chains family. In terms of assembly, F-type ATPases have 2 components, CF(1) - the catalytic core - and CF(0) - the membrane proton channel. CF(1) has five subunits: alpha(3), beta(3), gamma(1), delta(1), epsilon(1). CF(0) has three main subunits: a(1), b(2) and c(9-12). The alpha and beta chains form an alternating ring which encloses part of the gamma chain. CF(1) is attached to CF(0) by a central stalk formed by the gamma and epsilon chains, while a peripheral stalk is formed by the delta and b chains.

It is found in the cell inner membrane. The enzyme catalyses ATP + H2O + 4 H(+)(in) = ADP + phosphate + 5 H(+)(out). Its function is as follows. Produces ATP from ADP in the presence of a proton gradient across the membrane. The catalytic sites are hosted primarily by the beta subunits. This chain is ATP synthase subunit beta, found in Afipia carboxidovorans (strain ATCC 49405 / DSM 1227 / KCTC 32145 / OM5) (Oligotropha carboxidovorans).